A 430-amino-acid chain; its full sequence is MKTQMNYAKEGIFTKEMQIVAQKENLSKDFLLENIACGKIIIPANINHKSLDPNGIGFGLRTKVNVNLGVSNDCVDYSEEMKKVELAHKFGIEAIMDLSNYGKTSRFRDELVNVSKAMIGTVPVYDAVGFLEKDLKQINAKDFLDVVYHHAKSGVDFMTIHAGINSRAAHIFKQSKRLTNIVSRGGSVLYAWMMMKDAENPFFEYYDDLLDICLKYDVTLSLGDALRPGSTHDASDGAQISELIELSLLTQRAWDVGIQVMIEGPGHMAINEIEANMQLEKRLCKGAPFYVLGPLVIDIGAGYDHISGAIGGAVAAASGADMLCYVTPAEHLRLPNLEDVREGIVATKIAAHAGDIAKLPKERARDDEMSKARQEIDWEKMFKLAIDGEKAKKMFNERRPDDLNSCSMCGKMCAMNTMNQILKGEDVSLA.

Residues Asn-67, Met-96, Tyr-125, His-161, Ser-183 to Gly-185, Asp-224 to Arg-227, and Glu-263 contribute to the substrate site. A Zn(2+)-binding site is contributed by His-267. Residue Tyr-290 participates in substrate binding. His-331 serves as a coordination point for Zn(2+). Cys-406, Cys-409, and Cys-413 together coordinate [4Fe-4S] cluster.

The protein belongs to the ThiC family. Homodimer. Requires [4Fe-4S] cluster as cofactor.

It catalyses the reaction 5-amino-1-(5-phospho-beta-D-ribosyl)imidazole + S-adenosyl-L-methionine = 4-amino-2-methyl-5-(phosphooxymethyl)pyrimidine + CO + 5'-deoxyadenosine + formate + L-methionine + 3 H(+). It participates in cofactor biosynthesis; thiamine diphosphate biosynthesis. Its function is as follows. Catalyzes the synthesis of the hydroxymethylpyrimidine phosphate (HMP-P) moiety of thiamine from aminoimidazole ribotide (AIR) in a radical S-adenosyl-L-methionine (SAM)-dependent reaction. This chain is Phosphomethylpyrimidine synthase, found in Campylobacter jejuni subsp. jejuni serotype O:23/36 (strain 81-176).